A 416-amino-acid polypeptide reads, in one-letter code: Serine hydroxymethyltransferase (416 aa).

(6S)-5,6,7,8-tetrahydrofolate-binding positions include Leu118 and 122–124 (GHL). Residue Lys226 is modified to N6-(pyridoxal phosphate)lysine. Residues Glu242 and 350–352 (SPF) contribute to the (6S)-5,6,7,8-tetrahydrofolate site.

Belongs to the SHMT family. In terms of assembly, homodimer. Requires pyridoxal 5'-phosphate as cofactor.

It localises to the cytoplasm. The catalysed reaction is (6R)-5,10-methylene-5,6,7,8-tetrahydrofolate + glycine + H2O = (6S)-5,6,7,8-tetrahydrofolate + L-serine. It participates in one-carbon metabolism; tetrahydrofolate interconversion. It functions in the pathway amino-acid biosynthesis; glycine biosynthesis; glycine from L-serine: step 1/1. Its function is as follows. Catalyzes the reversible interconversion of serine and glycine with tetrahydrofolate (THF) serving as the one-carbon carrier. This reaction serves as the major source of one-carbon groups required for the biosynthesis of purines, thymidylate, methionine, and other important biomolecules. Also exhibits THF-independent aldolase activity toward beta-hydroxyamino acids, producing glycine and aldehydes, via a retro-aldol mechanism. In Helicobacter hepaticus (strain ATCC 51449 / 3B1), this protein is Serine hydroxymethyltransferase.